The primary structure comprises 242 residues: 6-carboxyhexanoate--CoA ligase (242 aa).

This sequence belongs to the BioW family. In terms of assembly, homodimer. Mg(2+) serves as cofactor.

It catalyses the reaction heptanedioate + ATP + CoA = 6-carboxyhexanoyl-CoA + AMP + diphosphate. It participates in metabolic intermediate metabolism; pimeloyl-CoA biosynthesis; pimeloyl-CoA from pimelate: step 1/1. Its function is as follows. Catalyzes the transformation of pimelate into pimeloyl-CoA with concomitant hydrolysis of ATP to AMP. In Veillonella parvula (strain ATCC 10790 / DSM 2008 / CCUG 5123 / JCM 12972 / NCTC 11810 / Te3) (Veillonella alcalescens), this protein is 6-carboxyhexanoate--CoA ligase.